Here is a 66-residue protein sequence, read N- to C-terminus: uncharacterized protein (66 aa).

In terms of domain architecture, HTH cro/C1-type spans 5–59; sequence VKELRARFGYSQEKLGETVGVTRQTVAAIEKGDYVPSLLLALKICKAFSMKMEDV. A DNA-binding region (H-T-H motif) is located at residues 16-35; that stretch reads QEKLGETVGVTRQTVAAIEK.

This is an uncharacterized protein from Bacillus subtilis (strain 168).